Consider the following 394-residue polypeptide: Aromatic-amino-acid aminotransferase (394 aa).

Residues Gly34, Tyr65, Trp127, and Asn180 each contribute to the substrate site. The residue at position 243 (Lys243) is an N6-(pyridoxal phosphate)lysine. Residue Arg371 coordinates substrate.

This sequence belongs to the class-I pyridoxal-phosphate-dependent aminotransferase family. In terms of assembly, homodimer. Pyridoxal 5'-phosphate is required as a cofactor.

The protein localises to the cytoplasm. It catalyses the reaction an aromatic L-alpha-amino acid + 2-oxoglutarate = an aromatic oxo-acid + L-glutamate. Its function is as follows. Shows activities toward both dicarboxylic and aromatic substrates. The protein is Aromatic-amino-acid aminotransferase (tyrB) of Paracoccus denitrificans.